Consider the following 322-residue polypeptide: MKRLFWNLKHKKAWLVLLLGTGMILSSCSNIDQSFFRELSVESVEKNTAYNQLPVNSTTFRNLVFGTRSYNDGNYVVVIATETDSSQINFLNGSTNQGTSSLSWGGTLGTTIRQVQNRYSTYPNGVKFLIWNDIAPGSVKWNPYARFPVVDRKNELASQEDKDNSNKLRRSDASAVRYREIVDFIQRTYGGNVANLINQSNVHAQTVGNDVTKAIVIAFRKDNLNKIRANFYGLDNSTNPNAPGSGQGDSTPPASSGEGGGSDGSSGGDSSSGNGQNTTPTSPQSSQPAVQRSQKSYGIKQHAVRVSVDFLNFLDSVYTPLN.

Residues 1–27 (MKRLFWNLKHKKAWLVLLLGTGMILSS) form the signal peptide. A lipid anchor (N-palmitoyl cysteine) is attached at C28. C28 carries S-diacylglycerol cysteine lipidation. Polar residues predominate over residues 235 to 254 (DNSTNPNAPGSGQGDSTPPA). The segment at 235–298 (DNSTNPNAPG…AVQRSQKSYG (64 aa)) is disordered. Residues 257-267 (GEGGGSDGSSG) are compositionally biased toward gly residues. The span at 274–296 (NGQNTTPTSPQSSQPAVQRSQKS) shows a compositional bias: polar residues.

It is found in the cell membrane. This is an uncharacterized protein from Mycoplasma genitalium (strain ATCC 33530 / DSM 19775 / NCTC 10195 / G37) (Mycoplasmoides genitalium).